A 359-amino-acid polypeptide reads, in one-letter code: Phosphoserine aminotransferase (359 aa).

Arginine 42 lines the L-glutamate pocket. Residues 76-77 (AS), tryptophan 102, threonine 152, aspartate 171, and glutamine 194 contribute to the pyridoxal 5'-phosphate site. Lysine 195 is subject to N6-(pyridoxal phosphate)lysine. 236 to 237 (NT) contacts pyridoxal 5'-phosphate.

The protein belongs to the class-V pyridoxal-phosphate-dependent aminotransferase family. SerC subfamily. As to quaternary structure, homodimer. The cofactor is pyridoxal 5'-phosphate.

The protein localises to the cytoplasm. The enzyme catalyses O-phospho-L-serine + 2-oxoglutarate = 3-phosphooxypyruvate + L-glutamate. It catalyses the reaction 4-(phosphooxy)-L-threonine + 2-oxoglutarate = (R)-3-hydroxy-2-oxo-4-phosphooxybutanoate + L-glutamate. It functions in the pathway amino-acid biosynthesis; L-serine biosynthesis; L-serine from 3-phospho-D-glycerate: step 2/3. The protein operates within cofactor biosynthesis; pyridoxine 5'-phosphate biosynthesis; pyridoxine 5'-phosphate from D-erythrose 4-phosphate: step 3/5. Catalyzes the reversible conversion of 3-phosphohydroxypyruvate to phosphoserine and of 3-hydroxy-2-oxo-4-phosphonooxybutanoate to phosphohydroxythreonine. This is Phosphoserine aminotransferase from Ruthia magnifica subsp. Calyptogena magnifica.